We begin with the raw amino-acid sequence, 528 residues long: Na(+)/H(+) antiporter NhaB (528 aa).

10 helical membrane-spanning segments follow: residues 11–31 (VNFL…FLVI), 67–87 (PGGL…SQVL), 98–118 (LLLI…LFVF), 140–160 (AFLS…AVGI), 240–260 (FFIR…LTCV), 311–331 (LVAG…SVII), 350–370 (EEAL…GVII), 391–411 (LVVF…VFVG), 449–469 (ATPN…APLI), and 476–496 (MVIM…VTIE).

The protein belongs to the NhaB Na(+)/H(+) (TC 2.A.34) antiporter family.

It localises to the cell inner membrane. It catalyses the reaction 2 Na(+)(in) + 3 H(+)(out) = 2 Na(+)(out) + 3 H(+)(in). Functionally, na(+)/H(+) antiporter that extrudes sodium in exchange for external protons. This Shewanella denitrificans (strain OS217 / ATCC BAA-1090 / DSM 15013) protein is Na(+)/H(+) antiporter NhaB.